The primary structure comprises 247 residues: Protein GrpE (247 aa).

Basic and acidic residues predominate over residues 31–49; sequence QKEETKTTNKDNQKEDETV. The interval 31–79 is disordered; that stretch reads QKEETKTTNKDNQKEDETVKNQSNQSNQSNQTKQTNTKQQKHQPKENSH. Over residues 50 to 68 the composition is skewed to low complexity; it reads KNQSNQSNQSNQTKQTNTK.

The protein belongs to the GrpE family. As to quaternary structure, homodimer.

Its subcellular location is the cytoplasm. In terms of biological role, participates actively in the response to hyperosmotic and heat shock by preventing the aggregation of stress-denatured proteins, in association with DnaK and GrpE. It is the nucleotide exchange factor for DnaK and may function as a thermosensor. Unfolded proteins bind initially to DnaJ; upon interaction with the DnaJ-bound protein, DnaK hydrolyzes its bound ATP, resulting in the formation of a stable complex. GrpE releases ADP from DnaK; ATP binding to DnaK triggers the release of the substrate protein, thus completing the reaction cycle. Several rounds of ATP-dependent interactions between DnaJ, DnaK and GrpE are required for fully efficient folding. This is Protein GrpE from Onion yellows phytoplasma (strain OY-M).